An 845-amino-acid chain; its full sequence is U-box domain-containing protein 52 (845 aa).

2 disordered regions span residues 180 to 210 and 229 to 258; these read RPSE…LPPE and SPAL…EVST. The segment covering 187 to 204 has biased composition (low complexity); the sequence is SGSIRFERSSSTSGSTDS. Residues 236 to 251 show a composition bias toward polar residues; that stretch reads MGSNAVAQMDTSSSGT. A coiled-coil region spans residues 351 to 468; that stretch reads SITDNQVNLN…REKDKLQASL (118 aa). The 265-residue stretch at 490–754 folds into the Protein kinase domain; the sequence is FAENLKIGIG…DLKDQIIPAL (265 aa). ATP contacts are provided by residues 496 to 504 and Lys-517; that span reads IGIGAYGSV. The active-site Proton acceptor is Asp-612. The region spanning 774 to 845 is the U-box domain; the sequence is GPPSHFICPL…AIMEWKSNKR (72 aa).

Belongs to the protein kinase superfamily. Ser/Thr protein kinase family.

The catalysed reaction is L-seryl-[protein] + ATP = O-phospho-L-seryl-[protein] + ADP + H(+). It carries out the reaction L-threonyl-[protein] + ATP = O-phospho-L-threonyl-[protein] + ADP + H(+). It catalyses the reaction S-ubiquitinyl-[E2 ubiquitin-conjugating enzyme]-L-cysteine + [acceptor protein]-L-lysine = [E2 ubiquitin-conjugating enzyme]-L-cysteine + N(6)-ubiquitinyl-[acceptor protein]-L-lysine.. Its pathway is protein modification; protein ubiquitination. Functionally, functions as an E3 ubiquitin ligase. This is U-box domain-containing protein 52 (PUB52) from Arabidopsis thaliana (Mouse-ear cress).